The following is a 216-amino-acid chain: 3-isopropylmalate dehydratase small subunit 2 (216 aa).

It belongs to the LeuD family. LeuD type 1 subfamily. Heterodimer of LeuC and LeuD.

It catalyses the reaction (2R,3S)-3-isopropylmalate = (2S)-2-isopropylmalate. Its pathway is amino-acid biosynthesis; L-leucine biosynthesis; L-leucine from 3-methyl-2-oxobutanoate: step 2/4. In terms of biological role, catalyzes the isomerization between 2-isopropylmalate and 3-isopropylmalate, via the formation of 2-isopropylmaleate. The protein is 3-isopropylmalate dehydratase small subunit 2 of Bordetella pertussis (strain Tohama I / ATCC BAA-589 / NCTC 13251).